Here is a 106-residue protein sequence, read N- to C-terminus: Large ribosomal subunit protein uL24 (106 aa).

This sequence belongs to the universal ribosomal protein uL24 family. As to quaternary structure, part of the 50S ribosomal subunit.

Functionally, one of two assembly initiator proteins, it binds directly to the 5'-end of the 23S rRNA, where it nucleates assembly of the 50S subunit. Its function is as follows. One of the proteins that surrounds the polypeptide exit tunnel on the outside of the subunit. The polypeptide is Large ribosomal subunit protein uL24 (Erythrobacter litoralis (strain HTCC2594)).